Here is a 995-residue protein sequence, read N- to C-terminus: UPF0182 protein MUL_2505 (995 aa).

7 helical membrane passes run 18–38 (VLILIALGVIALLLAGPRLID), 63–83 (FLVFLVAGVLVGGIVFAGLAL), 113–133 (LFGIGIPAAIGLLAGIVAQSY), 175–195 (FVAIFLAFVANVVSHYLFGGI), 210–230 (IQLVSLVGVLVLLKTVAYWLN), 259–279 (KLILMAIAVICAAAVFSAIVL), and 287–307 (IGLVLLLLSSLIVGAAWPMIV). The interval 900-947 (AATGIQPTEGGAPANVPPNNAPSPEALPGTPPSPPTAVPPAPEASVTL) is disordered. Pro residues predominate over residues 928-941 (GTPPSPPTAVPPAP).

This sequence belongs to the UPF0182 family.

It is found in the cell membrane. In Mycobacterium ulcerans (strain Agy99), this protein is UPF0182 protein MUL_2505.